The sequence spans 804 residues: Leucine--tRNA ligase (804 aa).

Residues 39–50 (PYPSGAGLHVGH) carry the 'HIGH' region motif. The 'KMSKS' region signature appears at 580-584 (KMSKS). Position 583 (K583) interacts with ATP.

The protein belongs to the class-I aminoacyl-tRNA synthetase family.

It localises to the cytoplasm. The catalysed reaction is tRNA(Leu) + L-leucine + ATP = L-leucyl-tRNA(Leu) + AMP + diphosphate. The chain is Leucine--tRNA ligase from Mycoplasma capricolum subsp. capricolum (strain California kid / ATCC 27343 / NCTC 10154).